The sequence spans 450 residues: MISEIAKLAALVLTNTVKVDDFLQSSKLPPPTFHEDGPIDLGLSPEVEAARVAAIESSLRLHDLLXGPVELIRPTVNAXSLEAIYKYDVASKVPIHGEIPIIELAXQCKMNEPDLRRILRFAIIHHRVFQEPRKGIITHSAASRRLVEDSAARDGLGLQFDDAWQSFARGFSLAHNTDKSVFEYMEAHPEKAKRFAGAMSSFSSYRGHGPEYLARGFPWASLGTKTVVDVGGSEGKYSIALAKSFPQLKFIVQDLPAVVRAVNAKRPIPLELEDRVTFMEHDMFTEQPVSADVYMFRFVFHDWPDKYVVNILRRLIPALKPGARIIISDSILPEPNTLSELYERKIRALDMVMLSFFNSRERERDDWERVCQEVDPRFKFVDAWVPEGAALGIIEAVWQPEPTMEXPKAIESDESSSTGVXDSAKGIKGMESNGRNGXISVTCVDDVDVN.

Asp-254 is an S-adenosyl-L-methionine binding site. The Proton acceptor role is filled by His-301.

This sequence belongs to the class I-like SAM-binding methyltransferase superfamily. Cation-independent O-methyltransferase family. COMT subfamily.

The protein operates within secondary metabolite biosynthesis. In terms of biological role, non-reducing polyketide synthase; part of the gene cluster that mediates the biosynthesis of orcinol depsidone grayanic acid (GRA), the only major secondary metabolite known in C.grayi. The first step consists in the ring and depside synthesis by PKS16 leading to 4-O-demethylsphaerophorin, involving different orcinol-like rings, one with acetyl CoA and the other with octanoyl CoA as the starter. Further depsidone formation by the GRA cluster-specific cytochrome P450 leads to 4-O-demethylgrayanic acid. Finally, the cluster specific O-methyltransferase probably converts the 4-O-demethylgrayanic acid into grayanic acid. In Cladonia grayi (Gray's cup lichen), this protein is Grayanic acid biosynthesis cluster O-methyltransferase.